A 353-amino-acid polypeptide reads, in one-letter code: Photosystem II protein D1 (353 aa).

N-acetylthreonine is present on threonine 2. Threonine 2 is modified (phosphothreonine). 3 helical membrane-spanning segments follow: residues 29–46 (YIGW…TATS), 118–133 (HFLL…EWEL), and 142–156 (WIAV…AATA). Histidine 118 is a chlorophyll a binding site. Residue tyrosine 126 participates in pheophytin a binding. The [CaMn4O5] cluster site is built by aspartate 170 and glutamate 189. The chain crosses the membrane as a helical span at residues 197–218 (FHMLGVAGVFGGSLFSAMHGSL). Histidine 198 lines the chlorophyll a pocket. A quinone contacts are provided by residues histidine 215 and 264-265 (SF). Histidine 215 contributes to the Fe cation binding site. Residue histidine 272 participates in Fe cation binding. The chain crosses the membrane as a helical span at residues 274–288 (FLAAWPVIGIWFTSL). [CaMn4O5] cluster is bound by residues histidine 332, glutamate 333, aspartate 342, and alanine 344. A propeptide spanning residues 345 to 353 (AVEAPSTIG) is cleaved from the precursor.

Belongs to the reaction center PufL/M/PsbA/D family. As to quaternary structure, PSII is composed of 1 copy each of membrane proteins PsbA, PsbB, PsbC, PsbD, PsbE, PsbF, PsbH, PsbI, PsbJ, PsbK, PsbL, PsbM, PsbT, PsbX, PsbY, PsbZ, Psb30/Ycf12, at least 3 peripheral proteins of the oxygen-evolving complex and a large number of cofactors. It forms dimeric complexes. The D1/D2 heterodimer binds P680, chlorophylls that are the primary electron donor of PSII, and subsequent electron acceptors. It shares a non-heme iron and each subunit binds pheophytin, quinone, additional chlorophylls, carotenoids and lipids. D1 provides most of the ligands for the Mn4-Ca-O5 cluster of the oxygen-evolving complex (OEC). There is also a Cl(-1) ion associated with D1 and D2, which is required for oxygen evolution. The PSII complex binds additional chlorophylls, carotenoids and specific lipids. serves as cofactor. Tyr-161 forms a radical intermediate that is referred to as redox-active TyrZ, YZ or Y-Z. In terms of processing, C-terminally processed by CTPA; processing is essential to allow assembly of the oxygen-evolving complex and thus photosynthetic growth.

It is found in the plastid. It localises to the chloroplast thylakoid membrane. It catalyses the reaction 2 a plastoquinone + 4 hnu + 2 H2O = 2 a plastoquinol + O2. In terms of biological role, photosystem II (PSII) is a light-driven water:plastoquinone oxidoreductase that uses light energy to abstract electrons from H(2)O, generating O(2) and a proton gradient subsequently used for ATP formation. It consists of a core antenna complex that captures photons, and an electron transfer chain that converts photonic excitation into a charge separation. The D1/D2 (PsbA/PsbD) reaction center heterodimer binds P680, the primary electron donor of PSII as well as several subsequent electron acceptors. In Landoltia punctata (Dotted duckmeat), this protein is Photosystem II protein D1.